Consider the following 284-residue polypeptide: MRLIIVSGRSGSGKSTALDVLEDNGFYCIDNLPAGLLPQLAEDALINTELLQPKVAVSIDARNLPSHLTRFPELLEEARARNIQCDVLFLDADEDMLLKRFSETRRRHPLTNANRSLAEAIRVESDLLGPIADLADLKIDTTNLNLYQLRDSIKLRLLNQPEPGTAFLVESFGFKRGMPVDADLVFDVRCLPNPYWKPELREHSGLDQPVIDYLAAQPDVEDMYNDISGYLLKWLPRFAASNRAYVTIAIGCTGGHHRSVYITERLGQHLQQTLKNVQVRHRDL.

8–15 (GRSGSGKS) is an ATP binding site. GTP is bound at residue 60–63 (DARN).

This sequence belongs to the RapZ-like family.

In terms of biological role, displays ATPase and GTPase activities. This chain is Nucleotide-binding protein PputGB1_0956, found in Pseudomonas putida (strain GB-1).